Reading from the N-terminus, the 472-residue chain is 2-amino-4-ketopentanoate thiolase beta subunit (472 aa).

Lys102 carries the post-translational modification N6-(pyridoxal phosphate)lysine. Residues Asn128 and Ala238–Asn242 each bind pyridoxal 5'-phosphate.

This sequence belongs to the threonine synthase family. In terms of assembly, heterodimer with OrtA. It depends on pyridoxal 5'-phosphate as a cofactor.

The catalysed reaction is D-alanine + acetyl-CoA = (2R)-2-amino-4-oxopentanoate + CoA. Functionally, involved in the ornithine fermentation pathway. Catalyzes the thiolytic cleavage of 2-amino-4-ketopentanoate (AKP) with coenzyme A (CoA) to form acetyl-CoA and alanine. It is strictly specific for AKP. The polypeptide is 2-amino-4-ketopentanoate thiolase beta subunit (Unknown prokaryotic organism).